Consider the following 409-residue polypeptide: Argininosuccinate synthase (409 aa).

Residues 12-20 (AYSGGLDTS) and alanine 39 each bind ATP. Tyrosine 91 provides a ligand contact to L-citrulline. Glycine 121 contributes to the ATP binding site. Residues threonine 123, asparagine 127, and aspartate 128 each contribute to the L-aspartate site. Residue asparagine 127 participates in L-citrulline binding. L-citrulline contacts are provided by arginine 131, serine 180, serine 189, glutamate 265, and tyrosine 277.

This sequence belongs to the argininosuccinate synthase family. Type 1 subfamily. As to quaternary structure, homotetramer.

It localises to the cytoplasm. It catalyses the reaction L-citrulline + L-aspartate + ATP = 2-(N(omega)-L-arginino)succinate + AMP + diphosphate + H(+). The protein operates within amino-acid biosynthesis; L-arginine biosynthesis; L-arginine from L-ornithine and carbamoyl phosphate: step 2/3. This is Argininosuccinate synthase from Buchnera aphidicola subsp. Baizongia pistaciae (strain Bp).